The primary structure comprises 152 residues: MTAKFRILVLNGPNLNLLGKREPGIYGAATLDDIVGRLQQLAAELDVELTHKQSNAEYELVDTIHQAMGTVDFILINPAAFTHTSVAIRDALLGVAIPFIEIHLSNVHAREPFRHHSFLSDVAKGVICGLGADGYEFALTAAVRHLERSSNN.

Tyr26 acts as the Proton acceptor in catalysis. Asn77, His83, and Asp90 together coordinate substrate. His103 acts as the Proton donor in catalysis. Residues 104-105 and Arg114 each bind substrate; that span reads LS.

Belongs to the type-II 3-dehydroquinase family. As to quaternary structure, homododecamer.

The catalysed reaction is 3-dehydroquinate = 3-dehydroshikimate + H2O. The protein operates within metabolic intermediate biosynthesis; chorismate biosynthesis; chorismate from D-erythrose 4-phosphate and phosphoenolpyruvate: step 3/7. Its function is as follows. Catalyzes a trans-dehydration via an enolate intermediate. This Tolumonas auensis (strain DSM 9187 / NBRC 110442 / TA 4) protein is 3-dehydroquinate dehydratase.